The following is a 429-amino-acid chain: Cyclin-B2-3 (429 aa).

Basic and acidic residues predominate over residues Ala86–Asp101. Residues Ala86 to Glu109 are disordered.

This sequence belongs to the cyclin family. Cyclin AB subfamily.

In Arabidopsis thaliana (Mouse-ear cress), this protein is Cyclin-B2-3 (CYCB2-3).